Consider the following 377-residue polypeptide: MATQGQRVNWGDEPSKRRGRSNSRGRKNNDIPLSFYNPITLEQGSKFWNLCPRDLVPKGIGNKDQQIGYWNRQIRYRIVKGQRKELAERWFFYFLGTGPHADAKFKDKIDGVFWVARDGAMNKPTTLGTRGTNNESKPLRFDGKIPPQFQLEVNRSRNNSRSGSQSRSVSRNRSQSRGRHHSNNQNNNVEDTIVAVLEKLGVTDKQRSRSKPRERSDSKPRDTTPKNANKHTWKKTAGKGDVTTFYGARSSSANFGDSDLVANGNAAKCYPQIAECVPSVSSIIFGSQWSAEEAGDQVKVTLTHTYYLPKDDAKTSQFLEQIDAYKRPSEVAKDQRQRRSRSKSADKKPEELSVTLVEAYTDVFDDTQVEMIDEVTN.

Disordered regions lie at residues 1–29 (MATQ…RKNN) and 121–236 (MNKP…WKKT). The segment covering 17–26 (RRGRSNSRGR) has biased composition (basic residues). Residues 31–153 (IPLSFYNPIT…KIPPQFQLEV (123 aa)) enclose the CoV N NTD domain. Positions 33–159 (LSFYNPITLE…QLEVNRSRNN (127 aa)) are RNA-binding. Polar residues predominate over residues 123-136 (KPTTLGTRGTNNES). Ser156 is subject to Phosphoserine; by host. Positions 156–173 (SRNNSRSGSQSRSVSRNR) are enriched in low complexity. Residues 201 to 224 (GVTDKQRSRSKPRERSDSKPRDTT) show a composition bias toward basic and acidic residues. A CoV N CTD domain is found at 220–333 (PRDTTPKNAN…AYKRPSEVAK (114 aa)). Residues 227–330 (NANKHTWKKT…QIDAYKRPSE (104 aa)) are dimerization. Residues Ser250 and Ser252 each carry the phosphoserine; by host modification. The interval 327–351 (RPSEVAKDQRQRRSRSKSADKKPEE) is disordered.

It belongs to the alphacoronavirus nucleocapsid protein family. In terms of assembly, homooligomer. Both monomeric and oligomeric forms interact with RNA. Interacts with protein M. Interacts with NSP3; this interaction serves to tether the genome to the newly translated replicase-transcriptase complex at a very early stage of infection. In terms of processing, ADP-ribosylated. The ADP-ribosylation is retained in the virion during infection. Phosphorylated on serine and threonine residues.

The protein localises to the virion. It is found in the host endoplasmic reticulum-Golgi intermediate compartment. Its subcellular location is the host Golgi apparatus. Packages the positive strand viral genome RNA into a helical ribonucleocapsid (RNP) and plays a fundamental role during virion assembly through its interactions with the viral genome and membrane protein M. Plays an important role in enhancing the efficiency of subgenomic viral RNA transcription as well as viral replication. The polypeptide is Nucleoprotein (Feline coronavirus (strain FIPV WSU-79/1146) (FCoV)).